Consider the following 330-residue polypeptide: Probable WRKY transcription factor 39 (330 aa).

The segment at residues 256–322 (KIADIPPDEY…YEGEHNHSRI (67 aa)) is a DNA-binding region (WRKY).

Its subcellular location is the nucleus. Its function is as follows. Transcription factor. Interacts specifically with the W box (5'-(T)TGAC[CT]-3'), a frequently occurring elicitor-responsive cis-acting element. The protein is Probable WRKY transcription factor 39 (WRKY39) of Arabidopsis thaliana (Mouse-ear cress).